A 76-amino-acid polypeptide reads, in one-letter code: Omega-conotoxin-like TxO2 (76 aa).

The signal sequence occupies residues 1 to 22 (MKLTCVVIVAVLFLTAWTFVTA). Residues 23–52 (APHSSNALENLYLKAHHEMNNPEDSELNKR) constitute a propeptide that is removed on maturation. Intrachain disulfides connect cysteine 53-cysteine 67, cysteine 60-cysteine 71, and cysteine 66-cysteine 75.

Belongs to the conotoxin O1 superfamily. Expressed by the venom duct.

Its subcellular location is the secreted. In terms of biological role, omega-conotoxins act at presynaptic membranes, they bind and block voltage-gated calcium channels (Cav). The chain is Omega-conotoxin-like TxO2 from Conus textile (Cloth-of-gold cone).